Consider the following 239-residue polypeptide: Serine protease SplF (239 aa).

An N-terminal signal peptide occupies residues 1–36 (MNKNIIIKSIAALTILTSITGVGTTVVDGIQQTAKA). Catalysis depends on charge relay system residues histidine 75, aspartate 114, and serine 192.

Belongs to the peptidase S1B family.

Its subcellular location is the secreted. The sequence is that of Serine protease SplF (splF) from Staphylococcus aureus (strain MSSA476).